The primary structure comprises 210 residues: Probable GTP-binding protein EngB (210 aa).

The EngB-type G domain occupies arginine 25–glutamate 199. Residues glycine 33–serine 40, glycine 60–leucine 64, aspartate 78–glycine 81, threonine 145–aspartate 148, and phenylalanine 178–serine 180 contribute to the GTP site. Positions 40 and 62 each coordinate Mg(2+).

The protein belongs to the TRAFAC class TrmE-Era-EngA-EngB-Septin-like GTPase superfamily. EngB GTPase family. Mg(2+) is required as a cofactor.

Necessary for normal cell division and for the maintenance of normal septation. The protein is Probable GTP-binding protein EngB of Salmonella paratyphi B (strain ATCC BAA-1250 / SPB7).